Here is a 167-residue protein sequence, read N- to C-terminus: ATP synthase subunit b (167 aa).

Residues 9–29 (ALPLGNMLFIIIAFLLLMLIL) traverse the membrane as a helical segment.

The protein belongs to the ATPase B chain family. In terms of assembly, F-type ATPases have 2 components, F(1) - the catalytic core - and F(0) - the membrane proton channel. F(1) has five subunits: alpha(3), beta(3), gamma(1), delta(1), epsilon(1). F(0) has three main subunits: a(1), b(2) and c(10-14). The alpha and beta chains form an alternating ring which encloses part of the gamma chain. F(1) is attached to F(0) by a central stalk formed by the gamma and epsilon chains, while a peripheral stalk is formed by the delta and b chains.

The protein localises to the cell membrane. Its function is as follows. F(1)F(0) ATP synthase produces ATP from ADP in the presence of a proton or sodium gradient. F-type ATPases consist of two structural domains, F(1) containing the extramembraneous catalytic core and F(0) containing the membrane proton channel, linked together by a central stalk and a peripheral stalk. During catalysis, ATP synthesis in the catalytic domain of F(1) is coupled via a rotary mechanism of the central stalk subunits to proton translocation. In terms of biological role, component of the F(0) channel, it forms part of the peripheral stalk, linking F(1) to F(0). The protein is ATP synthase subunit b of Leuconostoc mesenteroides subsp. mesenteroides (strain ATCC 8293 / DSM 20343 / BCRC 11652 / CCM 1803 / JCM 6124 / NCDO 523 / NBRC 100496 / NCIMB 8023 / NCTC 12954 / NRRL B-1118 / 37Y).